The primary structure comprises 273 residues: NAD(P)H-hydrate epimerase (273 aa).

The 209-residue stretch at 52 to 260 folds into the YjeF N-terminal domain; sequence AQQIDQELFN…GIIQKYELNL (209 aa). Residue 105 to 109 coordinates (6S)-NADPHX; that stretch reads NNGGD. The K(+) site is built by N106 and D170. (6S)-NADPHX is bound by residues 174–180 and D203; that span reads GFSFKGE. S206 contacts K(+).

The protein belongs to the NnrE/AIBP family. Requires K(+) as cofactor.

The enzyme catalyses (6R)-NADHX = (6S)-NADHX. The catalysed reaction is (6R)-NADPHX = (6S)-NADPHX. Its function is as follows. Catalyzes the epimerization of the S- and R-forms of NAD(P)HX, a damaged form of NAD(P)H that is a result of enzymatic or heat-dependent hydration. This is a prerequisite for the S-specific NAD(P)H-hydrate dehydratase to allow the repair of both epimers of NAD(P)HX. In Branchiostoma floridae (Florida lancelet), this protein is NAD(P)H-hydrate epimerase.